Here is a 163-residue protein sequence, read N- to C-terminus: 3-hydroxyacyl-[acyl-carrier-protein] dehydratase FabZ (163 aa).

Histidine 58 is an active-site residue.

This sequence belongs to the thioester dehydratase family. FabZ subfamily.

The protein localises to the cytoplasm. The enzyme catalyses a (3R)-hydroxyacyl-[ACP] = a (2E)-enoyl-[ACP] + H2O. In terms of biological role, involved in unsaturated fatty acids biosynthesis. Catalyzes the dehydration of short chain beta-hydroxyacyl-ACPs and long chain saturated and unsaturated beta-hydroxyacyl-ACPs. In Francisella philomiragia subsp. philomiragia (strain ATCC 25017 / CCUG 19701 / FSC 153 / O#319-036), this protein is 3-hydroxyacyl-[acyl-carrier-protein] dehydratase FabZ.